The sequence spans 819 residues: Myosin light chain kinase 3 (819 aa).

3 disordered regions span residues 146 to 256 (VPWR…TPSE), 273 to 334 (VVSP…TPPR), and 347 to 462 (EMLM…EQDC). The residue at position 152 (Ser-152) is a Phosphoserine. Composition is skewed to basic and acidic residues over residues 158-170 (EENKERVEEEGGK) and 183-196 (DAREPGEESQKADV). The segment covering 307-318 (GPGPQCPGPPGL) has biased composition (pro residues). Phosphoserine is present on residues Ser-355, Ser-401, and Ser-408. The 256-residue stretch at 515–770 (VCQHEVLGGG…ATQCLKHEWL (256 aa)) folds into the Protein kinase domain. Residues 521–529 (LGGGRFGQV) and Lys-544 each bind ATP. Residue Asp-636 is the Proton acceptor of the active site.

The protein belongs to the protein kinase superfamily. CAMK Ser/Thr protein kinase family. It depends on Mg(2+) as a cofactor. Phosphorylated on serine residues. Restricted to heart.

Its subcellular location is the cytoplasm. It carries out the reaction L-seryl-[myosin light chain] + ATP = O-phospho-L-seryl-[myosin light chain] + ADP + H(+). It catalyses the reaction L-threonyl-[myosin light chain] + ATP = O-phospho-L-threonyl-[myosin light chain] + ADP + H(+). In terms of biological role, kinase that phosphorylates MYL2 in vitro. Promotes sarcomere formation in cardiomyocytes and increases cardiomyocyte contractility. The protein is Myosin light chain kinase 3 (MYLK3) of Homo sapiens (Human).